The chain runs to 447 residues: Rab GDP dissociation inhibitor alpha (447 aa).

It belongs to the Rab GDI family. As to quaternary structure, interacts with RHOH. Interacts with the non-phosphorylated forms of RAB1A, RAB3A, RAB5A, RAB5B, RAB5C, RAB8A, RAB8B, RAB10, RAB12, RAB35, and RAB43.

It is found in the cytoplasm. It localises to the golgi apparatus. The protein localises to the trans-Golgi network. Regulates the GDP/GTP exchange reaction of most Rab proteins by inhibiting the dissociation of GDP from them, and the subsequent binding of GTP to them. Promotes the dissociation of GDP-bound Rab proteins from the membrane and inhibits their activation. Promotes the dissociation of RAB1A, RAB3A, RAB5A and RAB10 from membranes. In Pongo pygmaeus (Bornean orangutan), this protein is Rab GDP dissociation inhibitor alpha (GDI1).